The chain runs to 993 residues: ATP-dependent DNA helicase MPH1 (993 aa).

Residues 94 to 261 (IVHKSLFQNT…EVVNNLDISK (168 aa)) enclose the Helicase ATP-binding domain. Residue 107-114 (IPTGMGKT) participates in ATP binding. The DEAH box signature appears at 209 to 212 (DEAH). The region spanning 507-655 (KVERLHRQEQ…CIDYKKSDRI (149 aa)) is the Helicase C-terminal domain. Residues 530-551 (NDKLERSARRTGSSEEAQISGM) are disordered. Over residues 539–551 (RTGSSEEAQISGM) the composition is skewed to polar residues. Residues 751–810 (LVTSNENPSKKRKIFKALDNLENDSTEEASSSLETEDEEVSDDNNVFIAEGQNGCQKDLE) are FKH1-binding region. Phosphothreonine occurs at positions 776 and 785.

Belongs to the DEAD box helicase family. DEAH subfamily. FANCM sub-subfamily. In terms of assembly, interacts with the MHF histone-fold complex composed of MHF1 and MHF2 to form the FANCM-MHF complex. Interacts with FHK1. Phosphorylation at both Thr-776 and Thr-785 is required for the interaction with FKH1.

It localises to the nucleus. The catalysed reaction is ATP + H2O = ADP + phosphate + H(+). ATP-dependent DNA helicase involved in DNA damage repair by homologous recombination and in genome maintenance. Capable of unwinding D-loops. Plays a role in limiting crossover recombinants during mitotic DNA double-strand break (DSB) repair. Prevents crossovers between ectopic sequences by removing substrates for MUS81-MMS4 or RAD1-RAD10 cleavage. Component of a FANCM-MHF complex which promotes gene conversion at blocked replication forks, probably by reversal of the stalled fork. Binds to flap-structured DNA but not to non-flap nicked DNA, and participates in Okazaki fragment processing by stimulating the endonuclease activities of FEN1 and DNA2. Involved in recombination donor preference during mating-type switching via interaction with FKH1. The polypeptide is ATP-dependent DNA helicase MPH1 (Saccharomyces cerevisiae (strain ATCC 204508 / S288c) (Baker's yeast)).